Reading from the N-terminus, the 394-residue chain is MNKQSIRDIDVKGKRVFCRVDFNVPLKDGVIQDETRIQAALPTIKHLLDGGAKLVLASHLGRPKGEKKPEFSLAPVAKRLAELLGKDVPLVEEAYGPVAEEAVANLSEGDVVVLENVRFYPGETKNDPELAKGFAALADVYVNDAFGAAHRAHASTEGIAHHVDTAVAGLLMEKELEVLGKALSNPDRPFTAIIGGSKVADKIGVIDHLLDIVDTLIIGGGLSYTFSKALGHEVGTSLLEEDKLDLARQFMKKAEDKGVKFLMPVDCVITKEFGEETYVGPVDIDSIPADHMGLDIGPKTVELYADAIRESKLVVWNGPMGVFELDKYANGTKGVAQALADSDAYSIIGGGDSAAAAAKFGLADKMSHISTGGGASLEFMEGKKLPGVEALNDK.

Substrate contacts are provided by residues D21–N23, R36, H59–R62, R118, and R151. ATP contacts are provided by residues K202, G293, E324, and G350 to S353.

The protein belongs to the phosphoglycerate kinase family. Monomer.

It is found in the cytoplasm. The catalysed reaction is (2R)-3-phosphoglycerate + ATP = (2R)-3-phospho-glyceroyl phosphate + ADP. Its pathway is carbohydrate degradation; glycolysis; pyruvate from D-glyceraldehyde 3-phosphate: step 2/5. In Exiguobacterium sp. (strain ATCC BAA-1283 / AT1b), this protein is Phosphoglycerate kinase.